The chain runs to 365 residues: Aminomethyltransferase (365 aa).

Belongs to the GcvT family. In terms of assembly, the glycine cleavage system is composed of four proteins: P, T, L and H.

It carries out the reaction N(6)-[(R)-S(8)-aminomethyldihydrolipoyl]-L-lysyl-[protein] + (6S)-5,6,7,8-tetrahydrofolate = N(6)-[(R)-dihydrolipoyl]-L-lysyl-[protein] + (6R)-5,10-methylene-5,6,7,8-tetrahydrofolate + NH4(+). Functionally, the glycine cleavage system catalyzes the degradation of glycine. This Parafrankia sp. (strain EAN1pec) protein is Aminomethyltransferase.